A 273-amino-acid polypeptide reads, in one-letter code: Putative phosphoenolpyruvate synthase regulatory protein (273 aa).

ADP is bound at residue 153–160; it reads GVSRSGKT.

The protein belongs to the pyruvate, phosphate/water dikinase regulatory protein family. PSRP subfamily.

The catalysed reaction is [pyruvate, water dikinase] + ADP = [pyruvate, water dikinase]-phosphate + AMP + H(+). It carries out the reaction [pyruvate, water dikinase]-phosphate + phosphate + H(+) = [pyruvate, water dikinase] + diphosphate. Its function is as follows. Bifunctional serine/threonine kinase and phosphorylase involved in the regulation of the phosphoenolpyruvate synthase (PEPS) by catalyzing its phosphorylation/dephosphorylation. In Albidiferax ferrireducens (strain ATCC BAA-621 / DSM 15236 / T118) (Rhodoferax ferrireducens), this protein is Putative phosphoenolpyruvate synthase regulatory protein.